Consider the following 398-residue polypeptide: MAKLTVKDVDLKGKKVLVRVDFNVPLKDGVITNDNRITAALPTIKYIIEQGGRAILFSHLGRVKEEADKAGKSLAPVAADLAAKLGQDVVFPGVTRGAELEAAINALEDGQVLLVENTRYEDVDGKKESKNDPELGKYWASLGDGIFVNDAFGTAHRAHASNVGISANVEKAVAGFLLENEIAYIQEAVETPERPFVAILGGSKVSDKIGVIENLLEKADKVLIGGGMTYTFYKAQGIEIGNSLVEEDKLDVAKALLEKANGKLILPVDSKEANAFAGYTEVRDTEGEAVSEGFLGLDIGPKSIAKFDEALTGAKTVVWNGPMGVFENPDFQTGTIGVMDAIVKQPGVKSIIGGGDSAAAAINLGRADKFSWISTGGGASMELLEGKVLPGLAALTEK.

Residues 21–23, Arg36, 59–62, Arg119, and Arg157 contribute to the substrate site; these read DFN and HLGR. Residues Lys208, Gly296, Glu327, and 354–357 contribute to the ATP site; that span reads GGDS.

This sequence belongs to the phosphoglycerate kinase family. As to quaternary structure, monomer.

It is found in the cytoplasm. The catalysed reaction is (2R)-3-phosphoglycerate + ATP = (2R)-3-phospho-glyceroyl phosphate + ADP. It participates in carbohydrate degradation; glycolysis; pyruvate from D-glyceraldehyde 3-phosphate: step 2/5. The chain is Phosphoglycerate kinase from Streptococcus pneumoniae (strain 70585).